Consider the following 215-residue polypeptide: 3,4-dihydroxy-2-butanone 4-phosphate synthase (215 aa).

D-ribulose 5-phosphate contacts are provided by residues 37–38 (RE), Asp-42, 150–154 (RRGHT), and Glu-175. Residue Glu-38 coordinates Mg(2+). His-153 contributes to the Mg(2+) binding site.

It belongs to the DHBP synthase family. In terms of assembly, homodimer. Requires Mg(2+) as cofactor. Mn(2+) is required as a cofactor.

The catalysed reaction is D-ribulose 5-phosphate = (2S)-2-hydroxy-3-oxobutyl phosphate + formate + H(+). Its pathway is cofactor biosynthesis; riboflavin biosynthesis; 2-hydroxy-3-oxobutyl phosphate from D-ribulose 5-phosphate: step 1/1. Catalyzes the conversion of D-ribulose 5-phosphate to formate and 3,4-dihydroxy-2-butanone 4-phosphate. In Desulfatibacillum aliphaticivorans, this protein is 3,4-dihydroxy-2-butanone 4-phosphate synthase.